Consider the following 565-residue polypeptide: Sulfite reductase [NADPH] hemoprotein beta-component (565 aa).

[4Fe-4S] cluster contacts are provided by C429, C435, C474, and C478. C478 contributes to the siroheme binding site.

Belongs to the nitrite and sulfite reductase 4Fe-4S domain family. In terms of assembly, alpha(8)-beta(8). The alpha component is a flavoprotein, the beta component is a hemoprotein. Requires siroheme as cofactor. The cofactor is [4Fe-4S] cluster.

It carries out the reaction hydrogen sulfide + 3 NADP(+) + 3 H2O = sulfite + 3 NADPH + 4 H(+). It participates in sulfur metabolism; hydrogen sulfide biosynthesis; hydrogen sulfide from sulfite (NADPH route): step 1/1. In terms of biological role, component of the sulfite reductase complex that catalyzes the 6-electron reduction of sulfite to sulfide. This is one of several activities required for the biosynthesis of L-cysteine from sulfate. This is Sulfite reductase [NADPH] hemoprotein beta-component from Shewanella pealeana (strain ATCC 700345 / ANG-SQ1).